The sequence spans 231 residues: Flagellar L-ring protein (231 aa).

The N-terminal stretch at 1–18 (MNRYVSVLALSGIAVLAG) is a signal peptide. Cysteine 19 carries the N-palmitoyl cysteine lipid modification. The S-diacylglycerol cysteine moiety is linked to residue cysteine 19.

This sequence belongs to the FlgH family. In terms of assembly, the basal body constitutes a major portion of the flagellar organelle and consists of four rings (L,P,S, and M) mounted on a central rod.

It is found in the cell outer membrane. It localises to the bacterial flagellum basal body. Assembles around the rod to form the L-ring and probably protects the motor/basal body from shearing forces during rotation. The chain is Flagellar L-ring protein from Pseudomonas fluorescens (strain SBW25).